The sequence spans 178 residues: Adenine phosphoribosyltransferase (178 aa).

Belongs to the purine/pyrimidine phosphoribosyltransferase family. As to quaternary structure, homodimer.

The protein resides in the cytoplasm. The enzyme catalyses AMP + diphosphate = 5-phospho-alpha-D-ribose 1-diphosphate + adenine. Its pathway is purine metabolism; AMP biosynthesis via salvage pathway; AMP from adenine: step 1/1. Catalyzes a salvage reaction resulting in the formation of AMP, that is energically less costly than de novo synthesis. The chain is Adenine phosphoribosyltransferase from Cereibacter sphaeroides (strain ATCC 17029 / ATH 2.4.9) (Rhodobacter sphaeroides).